A 1691-amino-acid polypeptide reads, in one-letter code: Collagen alpha-6(IV) chain (1691 aa).

The N-terminal stretch at Met-1–Ala-22 is a signal peptide. The 7S domain stretch occupies residues Gly-23–Lys-46. A triple-helical region region spans residues Gly-47–Ser-1463. Disordered regions lie at residues Ile-108 to Lys-338, Gly-404 to Lys-473, Gly-486 to Pro-881, Gly-915 to Asp-1099, and Thr-1185 to Met-1459. An N-linked (GlcNAc...) asparagine glycan is attached at Asn-127. The span at Pro-185 to Pro-197 shows a compositional bias: low complexity. The span at Ala-198 to Leu-213 shows a compositional bias: pro residues. Composition is skewed to low complexity over residues Gln-311–Lys-320 and Gly-421–Leu-431. Composition is skewed to pro residues over residues Pro-432–Pro-443 and Thr-491–Pro-502. A compositionally biased stretch (low complexity) spans Trp-503–Lys-512. Residues Arg-515 to Asp-517 carry the Cell attachment site motif. Residues Pro-526–Pro-541 show a composition bias toward low complexity. Positions Arg-560–Asp-562 match the Cell attachment site motif. Residues Gly-588 to Gly-599 show a composition bias toward gly residues. 4 stretches are compositionally biased toward low complexity: residues Leu-641–Gly-652, Pro-660–Gly-703, Leu-722–Pro-735, and Ser-802–Pro-820. The span at Pro-842–Lys-851 shows a compositional bias: basic residues. Over residues Pro-853–Lys-878 the composition is skewed to low complexity. A Cell attachment site motif is present at residues Arg-986–Asp-988. Low complexity predominate over residues Ser-1055 to Lys-1068. A compositionally biased stretch (gly residues) spans Gly-1210–Gly-1220. Residues Pro-1234–Leu-1253 show a composition bias toward low complexity. The segment covering Pro-1275 to Pro-1284 has biased composition (pro residues). The span at Ser-1360–Thr-1371 shows a compositional bias: polar residues. 2 stretches are compositionally biased toward low complexity: residues Leu-1384 to Pro-1397 and Ala-1429 to Met-1459. The region spanning Gly-1467–Leu-1691 is the Collagen IV NC1 domain. 6 disulfide bridges follow: Cys-1482-Cys-1571, Cys-1515-Cys-1568, Cys-1527-Cys-1533, Cys-1590-Cys-1687, Cys-1624-Cys-1684, and Cys-1636-Cys-1643.

This sequence belongs to the type IV collagen family. As to quaternary structure, there are six type IV collagen isoforms, alpha 1(IV)-alpha 6(IV), each of which can form a triple helix structure with 2 other chains to generate type IV collagen network. In terms of processing, prolines at the third position of the tripeptide repeating unit (G-X-Y) are hydroxylated in some or all of the chains. Type IV collagens contain numerous cysteine residues which are involved in inter- and intramolecular disulfide bonding. 12 of these, located in the NC1 domain, are conserved in all known type IV collagens. Post-translationally, the trimeric structure of the NC1 domains is stabilized by covalent bonds between Lys and Met residues.

The protein localises to the secreted. The protein resides in the extracellular space. Its subcellular location is the extracellular matrix. It is found in the basement membrane. Type IV collagen is the major structural component of glomerular basement membranes (GBM), forming a 'chicken-wire' meshwork together with laminins, proteoglycans and entactin/nidogen. This is Collagen alpha-6(IV) chain (COL4A6) from Homo sapiens (Human).